Consider the following 221-residue polypeptide: Thiol:disulfide interchange protein TlpA (221 aa).

The Cytoplasmic segment spans residues 1-11 (MLDTKPSATRR). Residues 12-35 (IPLVIATVAVGGLAGFAALYGLGL) traverse the membrane as a helical segment. The Periplasmic portion of the chain corresponds to 36–221 (SRAPTGDPAC…AATGKAAAAL (186 aa)). Intrachain disulfides connect C45–C190 and C107–C110. In terms of domain architecture, Thioredoxin spans 69-215 (ASAPLKLPDL…ALKLIRAATG (147 aa)).

The protein belongs to the thioredoxin family. Monomer.

The protein localises to the cell membrane. Its function is as follows. Involved in cytochrome aa3 assembly. The sequence is that of Thiol:disulfide interchange protein TlpA (tlpA) from Bradyrhizobium diazoefficiens (strain JCM 10833 / BCRC 13528 / IAM 13628 / NBRC 14792 / USDA 110).